A 528-amino-acid chain; its full sequence is GMP synthase [glutamine-hydrolyzing] (528 aa).

In terms of domain architecture, Glutamine amidotransferase type-1 spans 13 to 204; it reads SILILDFGSQ…VYSISKCKAD (192 aa). The active-site Nucleophile is Cys-90. Residues His-178 and Glu-180 contribute to the active site. The GMPS ATP-PPase domain maps to 205-403; the sequence is WNTETFLEET…LGLPDEIIKR (199 aa). 232-238 provides a ligand contact to ATP; it reads SGGVDSS.

Homodimer.

The enzyme catalyses XMP + L-glutamine + ATP + H2O = GMP + L-glutamate + AMP + diphosphate + 2 H(+). It functions in the pathway purine metabolism; GMP biosynthesis; GMP from XMP (L-Gln route): step 1/1. Catalyzes the synthesis of GMP from XMP. This is GMP synthase [glutamine-hydrolyzing] from Prochlorococcus marinus (strain MIT 9515).